A 212-amino-acid chain; its full sequence is MNIFRLTGDLSHLAAIVILLLKIWKTRSCAGISGKSQLLFALVFTTRYLDLFTSFISLYNTSMKVIYLACSYATVYLIYLKFKATYDGNHDTFRVEFLVVPVGGLSFLVNHDFSPLEILWTFSIYLESVAILPQLFMISKTGEAETITTHYLFFLGLYRALYLVNWIWRFYFEGFFDLIAVVAGVVQTILYCDFFYLYITKVLKGKKLSLPA.

Topologically, residues 1–4 are lumenal; sequence MNIF. A helical transmembrane segment spans residues 5–24; sequence RLTGDLSHLAAIVILLLKIW. Topologically, residues 25–32 are cytoplasmic; that stretch reads KTRSCAGI. The helical transmembrane segment at 33–52 threads the bilayer; the sequence is SGKSQLLFALVFTTRYLDLF. The interval 47–48 is interaction with the K-D-E-L motif on target proteins; that stretch reads RY. Residues 53 to 58 lie on the Lumenal side of the membrane; that stretch reads TSFISL. A helical transmembrane segment spans residues 59-79; the sequence is YNTSMKVIYLACSYATVYLIY. The Cytoplasmic portion of the chain corresponds to 80 to 92; the sequence is LKFKATYDGNHDT. A helical membrane pass occupies residues 93–110; that stretch reads FRVEFLVVPVGGLSFLVN. At 111–116 the chain is on the lumenal side; that stretch reads HDFSPL. A helical transmembrane segment spans residues 117–135; sequence EILWTFSIYLESVAILPQL. Topologically, residues 136-149 are cytoplasmic; it reads FMISKTGEAETITT. Residues 150–168 form a helical membrane-spanning segment; the sequence is HYLFFLGLYRALYLVNWIW. An interaction with the K-D-E-L motif on target proteins region spans residues 159 to 169; it reads RALYLVNWIWR. At 169–178 the chain is on the lumenal side; the sequence is RFYFEGFFDL. The helical transmembrane segment at 179–199 threads the bilayer; it reads IAVVAGVVQTILYCDFFYLYI. Residues 200 to 212 are Cytoplasmic-facing; sequence TKVLKGKKLSLPA. The tract at residues 204–207 is important for recycling of cargo proteins with the sequence motif K-D-E-L from the Golgi to the endoplasmic reticulum; sequence KGKK.

This sequence belongs to the ERD2 family.

The protein resides in the endoplasmic reticulum membrane. The protein localises to the golgi apparatus membrane. It localises to the cytoplasmic vesicle. It is found in the COPI-coated vesicle membrane. Functionally, membrane receptor that binds the K-D-E-L sequence motif in the C-terminal part of endoplasmic reticulum resident proteins and maintains their localization in that compartment by participating to their vesicle-mediated recycling back from the Golgi. Binding is pH dependent, and is optimal at pH 5-5.4. This is ER lumen protein-retaining receptor 2 (KDELR2) from Homo sapiens (Human).